Here is a 257-residue protein sequence, read N- to C-terminus: Meiotically up-regulated gene 14 protein (257 aa).

The protein resides in the cytoplasm. It localises to the nucleus. Functionally, has a role in meiosis. The polypeptide is Meiotically up-regulated gene 14 protein (mug14) (Schizosaccharomyces pombe (strain 972 / ATCC 24843) (Fission yeast)).